A 218-amino-acid chain; its full sequence is ATP phosphoribosyltransferase (218 aa).

This sequence belongs to the ATP phosphoribosyltransferase family. Short subfamily. As to quaternary structure, heteromultimer composed of HisG and HisZ subunits.

Its subcellular location is the cytoplasm. The catalysed reaction is 1-(5-phospho-beta-D-ribosyl)-ATP + diphosphate = 5-phospho-alpha-D-ribose 1-diphosphate + ATP. The protein operates within amino-acid biosynthesis; L-histidine biosynthesis; L-histidine from 5-phospho-alpha-D-ribose 1-diphosphate: step 1/9. Catalyzes the condensation of ATP and 5-phosphoribose 1-diphosphate to form N'-(5'-phosphoribosyl)-ATP (PR-ATP). Has a crucial role in the pathway because the rate of histidine biosynthesis seems to be controlled primarily by regulation of HisG enzymatic activity. This chain is ATP phosphoribosyltransferase, found in Burkholderia thailandensis (strain ATCC 700388 / DSM 13276 / CCUG 48851 / CIP 106301 / E264).